The primary structure comprises 408 residues: Peptidase T (408 aa).

Histidine 78 provides a ligand contact to Zn(2+). Aspartate 80 is a catalytic residue. Position 140 (aspartate 140) interacts with Zn(2+). Residue glutamate 174 is the Proton acceptor of the active site. The Zn(2+) site is built by glutamate 175, aspartate 197, and histidine 379.

This sequence belongs to the peptidase M20B family. The cofactor is Zn(2+).

The protein localises to the cytoplasm. It catalyses the reaction Release of the N-terminal residue from a tripeptide.. Functionally, cleaves the N-terminal amino acid of tripeptides. This chain is Peptidase T, found in Staphylococcus aureus (strain MRSA252).